The following is a 357-amino-acid chain: tRNA-specific 2-thiouridylase MnmA (357 aa).

ATP is bound by residues 6-13 (AMSGGVDS) and leucine 32. The Nucleophile role is filled by cysteine 101. The cysteines at positions 101 and 193 are disulfide-linked. Residue glycine 125 coordinates ATP. The tract at residues 143–145 (KDQ) is interaction with tRNA. Catalysis depends on cysteine 193, which acts as the Cysteine persulfide intermediate.

Belongs to the MnmA/TRMU family.

The protein resides in the cytoplasm. The enzyme catalyses S-sulfanyl-L-cysteinyl-[protein] + uridine(34) in tRNA + AH2 + ATP = 2-thiouridine(34) in tRNA + L-cysteinyl-[protein] + A + AMP + diphosphate + H(+). Functionally, catalyzes the 2-thiolation of uridine at the wobble position (U34) of tRNA, leading to the formation of s(2)U34. The polypeptide is tRNA-specific 2-thiouridylase MnmA (Mycolicibacterium vanbaalenii (strain DSM 7251 / JCM 13017 / BCRC 16820 / KCTC 9966 / NRRL B-24157 / PYR-1) (Mycobacterium vanbaalenii)).